A 384-amino-acid chain; its full sequence is Anhydro-N-acetylmuramic acid kinase (384 aa).

Position 9–16 (9–16) interacts with ATP; sequence GTSVDGID.

The protein belongs to the anhydro-N-acetylmuramic acid kinase family.

The enzyme catalyses 1,6-anhydro-N-acetyl-beta-muramate + ATP + H2O = N-acetyl-D-muramate 6-phosphate + ADP + H(+). Its pathway is amino-sugar metabolism; 1,6-anhydro-N-acetylmuramate degradation. It functions in the pathway cell wall biogenesis; peptidoglycan recycling. In terms of biological role, catalyzes the specific phosphorylation of 1,6-anhydro-N-acetylmuramic acid (anhMurNAc) with the simultaneous cleavage of the 1,6-anhydro ring, generating MurNAc-6-P. Is required for the utilization of anhMurNAc either imported from the medium or derived from its own cell wall murein, and thus plays a role in cell wall recycling. The polypeptide is Anhydro-N-acetylmuramic acid kinase (Rippkaea orientalis (strain PCC 8801 / RF-1) (Cyanothece sp. (strain PCC 8801))).